A 482-amino-acid polypeptide reads, in one-letter code: BTB/POZ domain and ankyrin repeat-containing protein NOOT1 (482 aa).

The BTB domain occupies 25–107 (SDVVFSVEGR…LYSGQVSIVP (83 aa)). Residues 113 to 127 (RPNCGDRGCWHTHCT) form a C2HC NPR-type zinc finger. Zn(2+)-binding residues include Cys-116, Cys-121, His-123, and Cys-126. ANK repeat units follow at residues 249–278 (QKIRRMRRALDSSDVELVKLMVMGEGLNLD), 279–308 (EALALPYAVENCSREVVKALLELGAADVNF), 313–342 (TGKTPLHIAAEMVSPDMVAVLLDHHADPNV), and 346–380 (DGVTPLDILRTLTSDFLFKGAVPGLTHIEPNKLRL). The interval 395 to 434 (EEGNNNNSNNNNNATASSATNMYPHHNMNEDHHHSHNNNN) is disordered. The span at 398–415 (NNNNSNNNNNATASSATN) shows a compositional bias: low complexity.

It belongs to the plant 'ANKYRIN-BTB/POZ' family. 'NOOT-BOP-COCH-like' (NBCL) subfamily. As to quaternary structure, homodimer. Expressed in the shoot apical meristem (SAM) at the base of the developing leaf where stipules are formed. Associated with functional and vestigial abscission zones (AZs), including pulvini.

Its subcellular location is the nucleus. It localises to the cytoplasm. The protein resides in the cell membrane. It functions in the pathway protein modification; protein ubiquitination. May act as a substrate-specific adapter of an E3 ubiquitin-protein ligase complex (CUL3-RBX1-BTB) which mediates the ubiquitination and subsequent proteasomal degradation of target proteins. Transcriptional co-regulator involved in the promotion of leaf and floral meristem fate and determinacy. Promotes normal stipule growth and development. Required for the abscission of senescent organs, probably by regulating the cell wall disorganization in abscission zones (AZs, e.g. pulvini at the base of leaves). Involved in the coordination of the symbiotic nodule developmental program. Promotes the formation of root nodules by interacting directly with APP1 to modulate the expression of the nuclear transcription factor Y subunit (NF-YA1), a key nodulin. Necessary for the robust maintenance of nodule identity throughout the nodule developmental program. Involved in the regulation of indeterminate nodule identity in association with NOOT2. The chain is BTB/POZ domain and ankyrin repeat-containing protein NOOT1 from Medicago truncatula (Barrel medic).